The primary structure comprises 936 residues: MYATRAIARRLERHAARCKGAHVARAVRGARARTTSAPRALLDALGAGRGDADAFGTRTRRTRNAFVSSVDGDGSTGSTGSSSSSSSSAFGDSASSGGIMVSASHPSSHPQVLAVPLPRRPLMPGIIMPVKVTDEKLIAELEDMRNRGQAYVGAFLQRTDAASSASKGEGEDVFDALSAMKRTTTSVGLDGEEMVDEDEVDPADHMHDIGTFAQVHNIVRLPTDSTTGEESATLLLLGHRRLRKLGTMKRDPMVVKVEHLKDEKFDANDDIIKATTNEVVATIKDLLKTNPLHKETLQYFAQNFNDFQDPPKLADLGASMCSADDAQLQHVLELLSVKERLDATLELLKKEVEIGKLQADIGKKVEEKISGDQRRYFLMEQLKSIKKELGMERDDKTALIEKFTKRFEPKRASVPEDTAKVIDEELQKLGGLEPSSSEFNVTRNYLEWLTSLPWGVCGDEKLDISHAQEVLDSDHYGLEDVKDRILEFIAVGQLLGTTQGKIITMVGPPGVGKTSIGQSIAKALGRKFYRFSVGGMSDVAEIKGHRRTYVGAMPGKLIQCLKSTGVCNPVVLIDEIDKLGRGYQGDPASALLELLDPEQNGTFLDHYLDVPVDLSKVLFVCTANVLDTIPGPLLDRMEVVRLSGYITDEKVQIARTYLEKAAREKSGLSDVDASITDAAMGKLIGDYCREAGVRNLQKHLEKVYRKIALKVARAKSADEKLDSIVVDVDDLVDYVGQPPFATDRIYDVTPPGVVTGLAWTAMGGSTLYIECTAIDSGDGKGALKTTGQLGDVMKESSTIAHTFTRGFLELKDPGNKYLADTSLHVHVPAGATPKDGPSAGITITTSLLSLAMNKPVKPNLAMTGELTLTGRVLPIGGVKEKTIAARRSGVKTIIFPEGNKKDYDELSEDIREGLDAHFVSTYDEVYRQALDWEASS.

A mitochondrion-targeting transit peptide spans 1–40 (MYATRAIARRLERHAARCKGAHVARAVRGARARTTSAPRA). Positions 65–95 (AFVSSVDGDGSTGSTGSSSSSSSSAFGDSAS) are disordered. Over residues 66-95 (FVSSVDGDGSTGSTGSSSSSSSSAFGDSAS) the composition is skewed to low complexity. A Lon N-terminal domain is found at 112–352 (VLAVPLPRRP…ATLELLKKEV (241 aa)). 507–514 (GPPGVGKT) provides a ligand contact to ATP. One can recognise a Lon proteolytic domain in the interval 748–932 (VTPPGVVTGL…DEVYRQALDW (185 aa)). Residues serine 838 and lysine 881 contribute to the active site.

Belongs to the peptidase S16 family. Homohexamer or homoheptamer. Organized in a ring with a central cavity.

It localises to the mitochondrion matrix. It carries out the reaction Hydrolysis of proteins in presence of ATP.. Its function is as follows. ATP-dependent serine protease that mediates the selective degradation of misfolded, unassembled or oxidatively damaged polypeptides as well as certain short-lived regulatory proteins in the mitochondrial matrix. May also have a chaperone function in the assembly of inner membrane protein complexes. Participates in the regulation of mitochondrial gene expression and in the maintenance of the integrity of the mitochondrial genome. Binds to mitochondrial DNA in a site-specific manner. The protein is Lon protease homolog, mitochondrial of Ostreococcus lucimarinus (strain CCE9901).